Reading from the N-terminus, the 126-residue chain is Protein ApaG (126 aa).

One can recognise an ApaG domain in the interval 2–126 (SALDTSIRVE…FRLATPGLLH (125 aa)).

In Shewanella baltica (strain OS223), this protein is Protein ApaG.